The primary structure comprises 419 residues: Peptide chain release factor subunit 1 (419 aa).

The protein belongs to the eukaryotic release factor 1 family. Heterodimer of two subunits, one of which binds GTP.

The protein localises to the cytoplasm. Directs the termination of nascent peptide synthesis (translation) in response to the termination codons UAA, UAG and UGA. The protein is Peptide chain release factor subunit 1 of Methanococcus maripaludis (strain C6 / ATCC BAA-1332).